A 64-amino-acid chain; its full sequence is Large ribosomal subunit protein bL35 (64 aa).

This sequence belongs to the bacterial ribosomal protein bL35 family.

This Vibrio atlanticus (strain LGP32) (Vibrio splendidus (strain Mel32)) protein is Large ribosomal subunit protein bL35.